Here is a 663-residue protein sequence, read N- to C-terminus: Transmembrane 9 superfamily member 2 (663 aa).

The first 28 residues, 1-28 (MSARLPVLSPPRWPRLLLLSLLLLGAVP), serve as a signal peptide directing secretion. Residues 29–300 (GPRRSGGFYL…LESMPHTHIQ (272 aa)) lie on the Lumenal side of the membrane. A helical membrane pass occupies residues 301 to 321 (WFSIMNSLVIVLFLSGMVAMI). Over 322–374 (MLRTLHKDIARYNQMDSTEDAQEEFGWKLVHGDIFRPPRKGMLLSVFLGSGTQ) the chain is Cytoplasmic. Residues 375 to 395 (ILIMTFVTLFFACLGFLSPAN) traverse the membrane as a helical segment. Residues 396-398 (RGA) lie on the Lumenal side of the membrane. A helical membrane pass occupies residues 399–419 (LMTCAVVLWVLLGTPAGYVAA). Topologically, residues 420-437 (RFYKSFGGEKWKTNVLLT) are cytoplasmic. A helical transmembrane segment spans residues 438–458 (SFLCPGIVFADFFIMNLILWG). Over 459-466 (EGSSAAIP) the chain is Lumenal. Residues 467 to 487 (FGTLVAILALWFCISVPLTFI) form a helical membrane-spanning segment. The Cytoplasmic portion of the chain corresponds to 488–522 (GAYFGFKKNAIEHPVRTNQIPRQIPEQSFYTKPLP). A helical membrane pass occupies residues 523–543 (GIIMGGILPFGCIFIQLFFIL). Topologically, residues 544–554 (NSIWSHQMYYM) are lumenal. A helical membrane pass occupies residues 555 to 575 (FGFLFLVFIILVITCSEATIL). The Cytoplasmic segment spans residues 576 to 591 (LCYFHLCAEDYHWQWR). The helical transmembrane segment at 592–612 (SFLTSGFTAVYFLIYAVHYFF) threads the bilayer. The Lumenal portion of the chain corresponds to 613–631 (SKLQITGTASTILYFGYTM). The helical transmembrane segment at 632–652 (IMVLIFFLFTGTIGFFACFWF) threads the bilayer. The Cytoplasmic segment spans residues 653–663 (VTKIYSVVKVD).

It belongs to the nonaspanin (TM9SF) (TC 9.A.2) family.

Its subcellular location is the endosome membrane. The protein resides in the golgi outpost. It is found in the cytoplasm. The protein localises to the cytoskeleton. It localises to the microtubule organizing center. In the intracellular compartments, may function as a channel or small molecule transporter. This Pongo abelii (Sumatran orangutan) protein is Transmembrane 9 superfamily member 2 (TM9SF2).